Reading from the N-terminus, the 425-residue chain is Serine hydroxymethyltransferase 2 (425 aa).

(6S)-5,6,7,8-tetrahydrofolate contacts are provided by residues Leu121 and Gly125–Leu127. Lys230 carries the N6-(pyridoxal phosphate)lysine modification.

The protein belongs to the SHMT family. As to quaternary structure, homodimer. It depends on pyridoxal 5'-phosphate as a cofactor.

It is found in the cytoplasm. The catalysed reaction is (6R)-5,10-methylene-5,6,7,8-tetrahydrofolate + glycine + H2O = (6S)-5,6,7,8-tetrahydrofolate + L-serine. It functions in the pathway one-carbon metabolism; tetrahydrofolate interconversion. The protein operates within amino-acid biosynthesis; glycine biosynthesis; glycine from L-serine: step 1/1. Catalyzes the reversible interconversion of serine and glycine with tetrahydrofolate (THF) serving as the one-carbon carrier. This reaction serves as the major source of one-carbon groups required for the biosynthesis of purines, thymidylate, methionine, and other important biomolecules. Also exhibits THF-independent aldolase activity toward beta-hydroxyamino acids, producing glycine and aldehydes, via a retro-aldol mechanism. In Mycobacterium bovis (strain ATCC BAA-935 / AF2122/97), this protein is Serine hydroxymethyltransferase 2.